An 82-amino-acid polypeptide reads, in one-letter code: Sec-independent protein translocase protein TatA (82 aa).

A helical membrane pass occupies residues methionine 1–glycine 21. The segment covering isoleucine 36–serine 47 has biased composition (basic and acidic residues). A disordered region spans residues isoleucine 36–serine 82.

It belongs to the TatA/E family. As to quaternary structure, forms a complex with TatC.

The protein resides in the cell membrane. In terms of biological role, part of the twin-arginine translocation (Tat) system that transports large folded proteins containing a characteristic twin-arginine motif in their signal peptide across membranes. TatA could form the protein-conducting channel of the Tat system. In Deinococcus deserti (strain DSM 17065 / CIP 109153 / LMG 22923 / VCD115), this protein is Sec-independent protein translocase protein TatA.